A 616-amino-acid chain; its full sequence is Zinc metalloproteinase nas-36 (616 aa).

An N-terminal signal peptide occupies residues methionine 1–alanine 21. Residues glutamine 22 to arginine 125 constitute a propeptide that is removed on maturation. One can recognise a Peptidase M12A domain in the interval serine 126–lysine 321. Intrachain disulfides connect cysteine 168/cysteine 320, cysteine 191/cysteine 210, cysteine 324/cysteine 345, cysteine 347/cysteine 356, cysteine 367/cysteine 396, cysteine 424/cysteine 444, cysteine 518/cysteine 549, cysteine 522/cysteine 554, and cysteine 534/cysteine 539. Asparagine 173 carries an N-linked (GlcNAc...) asparagine glycan. Histidine 218 contacts Zn(2+). Glutamate 219 is a catalytic residue. The Zn(2+) site is built by histidine 222 and histidine 228. One can recognise an EGF-like domain in the interval asparagine 316–glutamate 357. One can recognise a CUB domain in the interval cysteine 367–threonine 481. A TSP type-1 domain is found at proline 506–proline 555.

The cofactor is Zn(2+).

The protein resides in the secreted. In terms of biological role, mtalloprotease. Involved in molting, a process during larval stages in which a new cuticle is formed and the old cuticle is shed. The protein is Zinc metalloproteinase nas-36 of Caenorhabditis briggsae.